The primary structure comprises 645 residues: 1,4-alpha-glucan branching enzyme GlgB (645 aa).

Residue aspartate 309 is the Nucleophile of the active site. Glutamate 352 functions as the Proton donor in the catalytic mechanism. The segment at 619-645 is disordered; it reads VKTRKGSKKQDGSKTKVRSNVTSRGKR. A compositionally biased stretch (polar residues) spans 636–645; the sequence is RSNVTSRGKR.

The protein belongs to the glycosyl hydrolase 13 family. GlgB subfamily. In terms of assembly, monomer.

It carries out the reaction Transfers a segment of a (1-&gt;4)-alpha-D-glucan chain to a primary hydroxy group in a similar glucan chain.. It functions in the pathway glycan biosynthesis; glycogen biosynthesis. Its function is as follows. Catalyzes the formation of the alpha-1,6-glucosidic linkages in glycogen by scission of a 1,4-alpha-linked oligosaccharide from growing alpha-1,4-glucan chains and the subsequent attachment of the oligosaccharide to the alpha-1,6 position. This is 1,4-alpha-glucan branching enzyme GlgB from Bacillus cereus (strain G9842).